Consider the following 497-residue polypeptide: Glycerol kinase (497 aa).

ADP is bound at residue T13. ATP-binding residues include T13, T14, and S15. T13 is a binding site for sn-glycerol 3-phosphate. Residue R17 participates in ADP binding. Sn-glycerol 3-phosphate contacts are provided by R83, E84, and Y135. Glycerol contacts are provided by R83, E84, and Y135. H231 is subject to Phosphohistidine; by HPr. Sn-glycerol 3-phosphate is bound at residue D245. D245 and Q246 together coordinate glycerol. The ADP site is built by T267 and G310. T267, G310, Q314, and G411 together coordinate ATP. The ADP site is built by G411 and N415.

This sequence belongs to the FGGY kinase family. In terms of assembly, homotetramer and homodimer (in equilibrium). Post-translationally, the phosphoenolpyruvate-dependent sugar phosphotransferase system (PTS), including enzyme I, and histidine-containing protein (HPr) are required for the phosphorylation, which leads to the activation of the enzyme.

The catalysed reaction is glycerol + ATP = sn-glycerol 3-phosphate + ADP + H(+). Its pathway is polyol metabolism; glycerol degradation via glycerol kinase pathway; sn-glycerol 3-phosphate from glycerol: step 1/1. Its activity is regulated as follows. Activated by phosphorylation and inhibited by fructose 1,6-bisphosphate (FBP). Its function is as follows. Key enzyme in the regulation of glycerol uptake and metabolism. Catalyzes the phosphorylation of glycerol to yield sn-glycerol 3-phosphate. The chain is Glycerol kinase from Listeria welshimeri serovar 6b (strain ATCC 35897 / DSM 20650 / CCUG 15529 / CIP 8149 / NCTC 11857 / SLCC 5334 / V8).